The chain runs to 362 residues: Putative F-box protein At3g25750 (362 aa).

Positions 4–52 constitute an F-box domain; it reads TEWSDLPEELLDLIANRYSSNIDVLRIRSTCKSWRSAVAMSKERLQFRF.

This is Putative F-box protein At3g25750 from Arabidopsis thaliana (Mouse-ear cress).